We begin with the raw amino-acid sequence, 254 residues long: Nickel import ATP-binding protein NikD (254 aa).

Residues 2–241 (PQQIELRNIA…PKHTVTRSLV (240 aa)) enclose the ABC transporter domain. 36–43 (GGSGSGKS) contacts ATP.

Belongs to the ABC transporter superfamily. Nickel importer (TC 3.A.1.5.3) family. In terms of assembly, the complex is composed of two ATP-binding proteins (NikD and NikE), two transmembrane proteins (NikB and NikC) and a solute-binding protein (NikA).

It localises to the cell inner membrane. The enzyme catalyses Ni(2+)(out) + ATP + H2O = Ni(2+)(in) + ADP + phosphate + H(+). Part of the ABC transporter complex NikABCDE involved in nickel import. Responsible for energy coupling to the transport system. The chain is Nickel import ATP-binding protein NikD from Shigella boydii serotype 4 (strain Sb227).